The following is a 216-amino-acid chain: MNRAELSQKIIDTCLEMTKLGLNQGTAGNVSVRYKDGMLITPTGMPYHLMKTENIVYVDGNGKHEENKLPSSEWQFHLSVYHTRPEANAVVHNHSIHCAGLSILEKPIPAIHYMVAVSGTDHIPCVPYATFGSHKLASYVATGIKESKAILLAHHGLITCGENLDKALWLAQEVEVLASWYLKLLSTGLEIPLLSKEQMQVVLGKFHTYGLRIEES.

Substrate contacts are provided by residues 28–29 (GN), 43–44 (TG), and 71–72 (SS). The active-site Proton donor/acceptor is glutamate 73. Zn(2+) contacts are provided by glutamate 73, histidine 92, histidine 94, and histidine 155.

It belongs to the aldolase class II family. AraD/FucA subfamily. As to quaternary structure, homotetramer. The cofactor is Zn(2+).

The catalysed reaction is L-fuculose 1-phosphate = (S)-lactaldehyde + dihydroxyacetone phosphate. The protein operates within carbohydrate degradation; L-fucose degradation; L-lactaldehyde and glycerone phosphate from L-fucose: step 3/3. Functionally, involved in the degradation of L-fucose and D-arabinose. Catalyzes the reversible cleavage of L-fuculose 1-phosphate (Fuc1P) to yield dihydroxyacetone phosphate (DHAP) and L-lactaldehyde. The protein is L-fuculose phosphate aldolase of Haemophilus influenzae (strain ATCC 51907 / DSM 11121 / KW20 / Rd).